Here is a 429-residue protein sequence, read N- to C-terminus: Serine--tRNA ligase (429 aa).

236-238 is an L-serine binding site; the sequence is TAE. Residue 267–269 participates in ATP binding; the sequence is RSE. E290 contacts L-serine. 354-357 contacts ATP; sequence EISS. S390 is an L-serine binding site.

It belongs to the class-II aminoacyl-tRNA synthetase family. Type-1 seryl-tRNA synthetase subfamily. In terms of assembly, homodimer. The tRNA molecule binds across the dimer.

The protein resides in the cytoplasm. The enzyme catalyses tRNA(Ser) + L-serine + ATP = L-seryl-tRNA(Ser) + AMP + diphosphate + H(+). It catalyses the reaction tRNA(Sec) + L-serine + ATP = L-seryl-tRNA(Sec) + AMP + diphosphate + H(+). It participates in aminoacyl-tRNA biosynthesis; selenocysteinyl-tRNA(Sec) biosynthesis; L-seryl-tRNA(Sec) from L-serine and tRNA(Sec): step 1/1. Its function is as follows. Catalyzes the attachment of serine to tRNA(Ser). Is also able to aminoacylate tRNA(Sec) with serine, to form the misacylated tRNA L-seryl-tRNA(Sec), which will be further converted into selenocysteinyl-tRNA(Sec). This Alcanivorax borkumensis (strain ATCC 700651 / DSM 11573 / NCIMB 13689 / SK2) protein is Serine--tRNA ligase.